Reading from the N-terminus, the 165-residue chain is Large ribosomal subunit protein uL10 (165 aa).

This sequence belongs to the universal ribosomal protein uL10 family. In terms of assembly, part of the ribosomal stalk of the 50S ribosomal subunit. The N-terminus interacts with L11 and the large rRNA to form the base of the stalk. The C-terminus forms an elongated spine to which L12 dimers bind in a sequential fashion forming a multimeric L10(L12)X complex.

Its function is as follows. Forms part of the ribosomal stalk, playing a central role in the interaction of the ribosome with GTP-bound translation factors. The chain is Large ribosomal subunit protein uL10 from Yersinia pseudotuberculosis serotype IB (strain PB1/+).